Reading from the N-terminus, the 398-residue chain is Probable peptidoglycan glycosyltransferase FtsW (398 aa).

Over 1 to 25 (MCYGGTAMMAFADIKEALTPKPSAQ) the chain is Cytoplasmic. Residues 26 to 46 (LYDVPLLYCMLMLMGVGFVMV) traverse the membrane as a helical segment. Over 47–69 (TSASMPTADRLFGNIYHFTIRHG) the chain is Periplasmic. Residues 70 to 90 (IFLALSFCLFWITTSVPMSWW) form a helical membrane-spanning segment. Position 91 (Lys-91) is a topological domain, cytoplasmic. The chain crosses the membrane as a helical span at residues 92–112 (KANPYLLLVGLGLLLIVLIVG). Over 113–120 (REVNGSTR) the chain is Periplasmic. The helical transmembrane segment at 121–141 (WIPIGPFNIQASELAKLFFFS) threads the bilayer. Topologically, residues 142–156 (YISGYLVRKRSEVQE) are cytoplasmic. A helical transmembrane segment spans residues 157–177 (NIKGFIKPILVFAAYAGLILM). Residues 178-179 (QP) lie on the Periplasmic side of the membrane. A helical membrane pass occupies residues 180–200 (DLGTVVVMFVTTVGLLFLAGA). Residue Lys-201 is a topological domain, cytoplasmic. Residues 202 to 222 (LWQFFVLILTGVALVIGLIVL) traverse the membrane as a helical segment. Topologically, residues 223–289 (EPYRMARVIG…DFIFAVIAEE (67 aa)) are periplasmic. The helical transmembrane segment at 290–312 (LGFVGVSSILIVLGTLVFRALLI) threads the bilayer. At 313 to 324 (GQNALKNGKEYE) the chain is on the cytoplasmic side. A helical transmembrane segment spans residues 325–345 (GYLALAIGIWFAFQTMVNVGA). Topologically, residues 346 to 356 (SAGILPTKGLT) are periplasmic. A helical transmembrane segment spans residues 357 to 377 (LPFISYGGSSLLMMTIAAGIL). Residues 378–398 (LRVDFETKMATKQATSGGAKR) lie on the Cytoplasmic side of the membrane.

It belongs to the SEDS family. FtsW subfamily.

It localises to the cell inner membrane. The catalysed reaction is [GlcNAc-(1-&gt;4)-Mur2Ac(oyl-L-Ala-gamma-D-Glu-L-Lys-D-Ala-D-Ala)](n)-di-trans,octa-cis-undecaprenyl diphosphate + beta-D-GlcNAc-(1-&gt;4)-Mur2Ac(oyl-L-Ala-gamma-D-Glu-L-Lys-D-Ala-D-Ala)-di-trans,octa-cis-undecaprenyl diphosphate = [GlcNAc-(1-&gt;4)-Mur2Ac(oyl-L-Ala-gamma-D-Glu-L-Lys-D-Ala-D-Ala)](n+1)-di-trans,octa-cis-undecaprenyl diphosphate + di-trans,octa-cis-undecaprenyl diphosphate + H(+). It functions in the pathway cell wall biogenesis; peptidoglycan biosynthesis. In terms of biological role, peptidoglycan polymerase that is essential for cell division. The protein is Probable peptidoglycan glycosyltransferase FtsW of Pseudoalteromonas translucida (strain TAC 125).